The following is a 290-amino-acid chain: Small ribosomal subunit biogenesis GTPase RsgA (290 aa).

The CP-type G domain maps to 62 to 213 (KNSLVRPPIV…IADTPGFSSL (152 aa)). GTP-binding positions include 111-114 (SKTD) and 156-164 (GQTGVGKTT). Zn(2+)-binding residues include C237, C242, H244, and C250.

It belongs to the TRAFAC class YlqF/YawG GTPase family. RsgA subfamily. In terms of assembly, monomer. Associates with 30S ribosomal subunit, binds 16S rRNA. The cofactor is Zn(2+).

The protein localises to the cytoplasm. Its function is as follows. One of several proteins that assist in the late maturation steps of the functional core of the 30S ribosomal subunit. Helps release RbfA from mature subunits. May play a role in the assembly of ribosomal proteins into the subunit. Circularly permuted GTPase that catalyzes slow GTP hydrolysis, GTPase activity is stimulated by the 30S ribosomal subunit. This is Small ribosomal subunit biogenesis GTPase RsgA from Streptococcus mutans serotype c (strain ATCC 700610 / UA159).